The primary structure comprises 508 residues: MKRWWFNSMLFKKEFEHRCRLSKSMGSLGPIENASESKDPNRNDTDKNIQGWGGHDNYSNVDLFFGVKDIRNFFSDDTFLVKDSNGDSYSIYFDIENHIFEIANDHPFCSELESSFYRNSSDLNNGSKSKNPDHDRYMDDTQYTWNNHINSCIDSYLQYQICIDNYIVSGNDNSSNNNSSNENSSNENSSNENSSNENSSNDYISSSISSQSENSSQNEDITTSDQTIPESSTHMGVTQQYRHLWVQCENCYGLNYKKFFKSKMHLCEQCGYHLKMSSSDRIELLIDPGTWEPMDEDMVSLDPIEFHSEEEPYKNRIDSYQRNTGLTEAVQTGRGQLNGITVAIGVMDFQFMGGSMGSVVGEKITRLIEYATKEFLPLIIVCASGGARMQEGSVSLMQMAKISSALYDYQSNKKLFYVPILTSPTTGGVTASFGMLGDIIIAEPNAYIAFAGKRVIEQTLNKTVPEGSQAAEYLFQKGLFDLIVPRNPLKSVLSELFQLHTFFPLNQN.

Disordered regions lie at residues 30–51 (PIEN…NIQG) and 173–234 (NSSN…SSTH). Positions 35 to 47 (SESKDPNRNDTDK) are enriched in basic and acidic residues. The span at 173-219 (NSSNNNSSNENSSNENSSNENSSNENSSNDYISSSISSQSENSSQNE) shows a compositional bias: low complexity. A compositionally biased stretch (polar residues) spans 220–234 (DITTSDQTIPESSTH). The region spanning 244 to 508 (LWVQCENCYG…LHTFFPLNQN (265 aa)) is the CoA carboxyltransferase N-terminal domain. Zn(2+) is bound by residues C248, C251, C267, and C270. The segment at 248–270 (CENCYGLNYKKFFKSKMHLCEQC) adopts a C4-type zinc-finger fold.

Belongs to the AccD/PCCB family. In terms of assembly, acetyl-CoA carboxylase is a heterohexamer composed of biotin carboxyl carrier protein, biotin carboxylase and 2 subunits each of ACCase subunit alpha and ACCase plastid-coded subunit beta (accD). The cofactor is Zn(2+).

The protein localises to the plastid. The protein resides in the chloroplast stroma. It catalyses the reaction N(6)-carboxybiotinyl-L-lysyl-[protein] + acetyl-CoA = N(6)-biotinyl-L-lysyl-[protein] + malonyl-CoA. Its pathway is lipid metabolism; malonyl-CoA biosynthesis; malonyl-CoA from acetyl-CoA: step 1/1. Functionally, component of the acetyl coenzyme A carboxylase (ACC) complex. Biotin carboxylase (BC) catalyzes the carboxylation of biotin on its carrier protein (BCCP) and then the CO(2) group is transferred by the transcarboxylase to acetyl-CoA to form malonyl-CoA. In Lactuca sativa (Garden lettuce), this protein is Acetyl-coenzyme A carboxylase carboxyl transferase subunit beta, chloroplastic.